Consider the following 1511-residue polypeptide: ATP-dependent permease PDR12 (1511 aa).

Residues 1–21 show a composition bias toward basic and acidic residues; sequence MSSTDEHIEKDISSRSNHDDD. A disordered region spans residues 1–37; that stretch reads MSSTDEHIEKDISSRSNHDDDYANSVQSYAASEGQVD. An N-acetylserine modification is found at Ser2. The Cytoplasmic portion of the chain corresponds to 2 to 508; the sequence is SSTDEHIEKD…RGFQRVKGDS (507 aa). Residues Ser32, Ser52, and Ser56 each carry the phosphoserine modification. In terms of domain architecture, ABC transporter 1 spans 144–397; sequence IPAHLISKFT…FQRMGWVKPN (254 aa). Lys426 is covalently cross-linked (Glycyl lysine isopeptide (Lys-Gly) (interchain with G-Cter in ubiquitin)). Residues 509 to 529 form a helical membrane-spanning segment; that stretch reads TYTKVYLSSFLIKALIIGSMF. The Extracellular portion of the chain corresponds to 530–548; it reads HKIDDKSQSTTAGAYSRGG. Residues 549–569 form a helical membrane-spanning segment; the sequence is MLFYVLLFASVTSLAEIGNSF. Over 570 to 597 the chain is Cytoplasmic; that stretch reads SSRPVIVKHKSYSMYHLSAESLQEIITE. Residues 598–618 traverse the membrane as a helical segment; it reads FPTKFVAIVILCLITYWIPFM. Residues 619-622 lie on the Extracellular side of the membrane; sequence KYEA. A helical membrane pass occupies residues 623-643; that stretch reads GAFFQYILYLLTVQQCTSFIF. The Cytoplasmic segment spans residues 644–657; the sequence is KFVATMSKSGVDAH. A helical membrane pass occupies residues 658–678; the sequence is AVGGLWVLMLCVYAGFVLPIG. At 679–765 the chain is on the extracellular side; that stretch reads EMHHWIRWLH…FAYKHAWRNW (87 aa). A helical membrane pass occupies residues 766-786; the sequence is GVNIVWTFGYIVFNVILSEYL. Residues 787-1182 are Cytoplasmic-facing; sequence KPVEGGGDLL…WRSPVYIRAK (396 aa). An ABC transporter 2 domain is found at 836 to 1084; the sequence is IAEKDVFTWN…TLLKYFERQS (249 aa). ATP-binding positions include 878–885 and 972–979; these read GESGAGKT and AEALVGKT. The chain crosses the membrane as a helical span at residues 1183 to 1203; it reads FFECVACALFVGLSYVGVNHS. Position 1204 (Val1204) is a topological domain, extracellular. A helical transmembrane segment spans residues 1205–1225; the sequence is GGAIEAFSSIFMLLLIALAMI. Residues 1226 to 1254 lie on the Cytoplasmic side of the membrane; it reads NQLHVFAYDSRELYEVREAASNTFHWSVL. Residues 1255 to 1275 traverse the membrane as a helical segment; sequence LLCHAAVENFWSTLCQFMCFI. Residues 1276-1291 are Extracellular-facing; that stretch reads CYYWPAQFSGRASHAG. The chain crosses the membrane as a helical span at residues 1292–1312; that stretch reads FFFFFYVLIFPLYFVTYGLWI. At 1313–1318 the chain is on the cytoplasmic side; it reads LYMSPD. Residues 1319–1339 traverse the membrane as a helical segment; the sequence is VPSASMINSNLFAAMLLFCGI. The Extracellular portion of the chain corresponds to 1340–1444; that stretch reads LQPREKMPAF…NVKWDHRWRN (105 aa). N-linked (GlcNAc...) asparagine glycosylation occurs at Asn1405. The helical transmembrane segment at 1445–1465 threads the bilayer; it reads FGFMWAYICFNIAAMLICYYV. Topologically, residues 1466–1511 are cytoplasmic; the sequence is VRVKVWSLKSVLNFKKWFNGPRKERHEKDTNIFQTVPGDENKITKK.

The protein belongs to the ABC transporter superfamily. ABCG family. PDR (TC 3.A.1.205) subfamily.

The protein localises to the cell membrane. In terms of biological role, plasma membrane transporter which mediates resistance to water-soluble, monocarboxylic acids with chain lengths of from C1 to C7 by active extrusion of the preservative anions from the cytosol. Also involved in the export of aromatic and branched-chain organic acids produced in amino acid catabolism. This Saccharomyces cerevisiae (strain ATCC 204508 / S288c) (Baker's yeast) protein is ATP-dependent permease PDR12 (PDR12).